A 187-amino-acid chain; its full sequence is NADH-quinone oxidoreductase subunit B (187 aa).

Cys-66, Cys-67, Cys-131, and Cys-161 together coordinate [4Fe-4S] cluster.

Belongs to the complex I 20 kDa subunit family. As to quaternary structure, NDH-1 is composed of 14 different subunits. Subunits NuoB, C, D, E, F, and G constitute the peripheral sector of the complex. [4Fe-4S] cluster serves as cofactor.

It is found in the cell inner membrane. The enzyme catalyses a quinone + NADH + 5 H(+)(in) = a quinol + NAD(+) + 4 H(+)(out). In terms of biological role, NDH-1 shuttles electrons from NADH, via FMN and iron-sulfur (Fe-S) centers, to quinones in the respiratory chain. The immediate electron acceptor for the enzyme in this species is believed to be ubiquinone. Couples the redox reaction to proton translocation (for every two electrons transferred, four hydrogen ions are translocated across the cytoplasmic membrane), and thus conserves the redox energy in a proton gradient. The chain is NADH-quinone oxidoreductase subunit B from Methylocella silvestris (strain DSM 15510 / CIP 108128 / LMG 27833 / NCIMB 13906 / BL2).